We begin with the raw amino-acid sequence, 136 residues long: Globin-2 (136 aa).

The Globin domain occupies 1 to 134; sequence VSQADIAAVQ…ILSQMKIALS (134 aa). A heme b-binding site is contributed by histidine 89.

This sequence belongs to the globin family. As to quaternary structure, homodimer.

The polypeptide is Globin-2 (Phreagena soyoae (Deep-sea cold-seep clam)).